We begin with the raw amino-acid sequence, 696 residues long: UvrABC system protein B (696 aa).

Residues 45–434 (EGIGDGLSYQ…DEVVEQVVRP (390 aa)) enclose the Helicase ATP-binding domain. Residue 58–65 (GVTGSGKT) coordinates ATP. The Beta-hairpin motif lies at 111–134 (YYDYYQPEAYVPQRDLFIEKDSSV). Positions 450–616 (QVDDLLSEIH…GVVKRIKDII (167 aa)) constitute a Helicase C-terminal domain. Positions 647 to 682 (GKEIKRLEKQMLDHAKNLEFEKAAAVRDQLAKLKSQ) constitute a UVR domain.

Belongs to the UvrB family. Forms a heterotetramer with UvrA during the search for lesions. Interacts with UvrC in an incision complex.

Its subcellular location is the cytoplasm. Functionally, the UvrABC repair system catalyzes the recognition and processing of DNA lesions. A damage recognition complex composed of 2 UvrA and 2 UvrB subunits scans DNA for abnormalities. Upon binding of the UvrA(2)B(2) complex to a putative damaged site, the DNA wraps around one UvrB monomer. DNA wrap is dependent on ATP binding by UvrB and probably causes local melting of the DNA helix, facilitating insertion of UvrB beta-hairpin between the DNA strands. Then UvrB probes one DNA strand for the presence of a lesion. If a lesion is found the UvrA subunits dissociate and the UvrB-DNA preincision complex is formed. This complex is subsequently bound by UvrC and the second UvrB is released. If no lesion is found, the DNA wraps around the other UvrB subunit that will check the other stand for damage. The chain is UvrABC system protein B from Ralstonia nicotianae (strain ATCC BAA-1114 / GMI1000) (Ralstonia solanacearum).